Reading from the N-terminus, the 204-residue chain is Guanylate kinase (204 aa).

The region spanning 4 to 182 is the Guanylate kinase-like domain; it reads GLLYVISAPS…ALNQLRAIVQ (179 aa). 11–18 is a binding site for ATP; sequence APSGAGKT.

The protein belongs to the guanylate kinase family.

The protein resides in the cytoplasm. The enzyme catalyses GMP + ATP = GDP + ADP. Its function is as follows. Essential for recycling GMP and indirectly, cGMP. The protein is Guanylate kinase of Methylococcus capsulatus (strain ATCC 33009 / NCIMB 11132 / Bath).